We begin with the raw amino-acid sequence, 473 residues long: Crt homolog 1 (473 aa).

Residues Met-1–Thr-49 lie on the Cytoplasmic side of the membrane. Residues Ile-50–Leu-70 traverse the membrane as a helical segment. The Vacuolar segment spans residues Lys-71 to Tyr-80. A helical membrane pass occupies residues Ala-81–Ala-101. Over Tyr-102–Lys-121 the chain is Cytoplasmic. Residues Phe-122–Ser-142 form a helical membrane-spanning segment. Over Thr-143–Pro-146 the chain is Vacuolar. A helical membrane pass occupies residues Leu-147–Leu-167. The Cytoplasmic segment spans residues Lys-168–Gln-175. A helical transmembrane segment spans residues Leu-176 to Gly-196. Topologically, residues Gly-197–Asn-207 are vacuolar. The helical transmembrane segment at Phe-208–Phe-228 threads the bilayer. Topologically, residues Gln-229–Ser-248 are cytoplasmic. Residues Ile-249–Phe-269 traverse the membrane as a helical segment. At Glu-270–Trp-322 the chain is on the vacuolar side. Asn-295 is a glycosylation site (N-linked (GlcNAc...) asparagine). A helical membrane pass occupies residues Ile-323–Leu-343. The Cytoplasmic portion of the chain corresponds to Lys-344–Ser-352. Residues Ile-353–Gly-373 traverse the membrane as a helical segment. A topological domain (vacuolar) is located at residue Ser-374. A helical transmembrane segment spans residues Ala-375 to Gly-395. At Gly-396–Ala-473 the chain is on the cytoplasmic side.

Belongs to the CRT-like transporter family.

It is found in the vacuole membrane. Its function is as follows. Nutrient transporter. Involved in maintaining the osmotic homeostasis of the digestive vacuole. This chain is Crt homolog 1 (crtp1), found in Dictyostelium discoideum (Social amoeba).